A 190-amino-acid polypeptide reads, in one-letter code: Mediator of RNA polymerase II transcription subunit 28 (190 aa).

Residues 76-108 are a coiled coil; it reads MLIKDENQDLSIEIQRKEALLQKHYNRLEEWKA.

The protein belongs to the Mediator complex subunit 28 family. Component of the Mediator complex.

It localises to the nucleus. Functionally, component of the Mediator complex, a coactivator involved in the regulated transcription of nearly all RNA polymerase II-dependent genes. Mediator functions as a bridge to convey information from gene-specific regulatory proteins to the basal RNA polymerase II transcription machinery. Mediator is recruited to promoters by direct interactions with regulatory proteins and serves as a scaffold for the assembly of a functional preinitiation complex with RNA polymerase II and the general transcription factors. This Drosophila pseudoobscura pseudoobscura (Fruit fly) protein is Mediator of RNA polymerase II transcription subunit 28 (MED28).